Consider the following 164-residue polypeptide: MFHILRLESTVDLSEPLKDNGIIVFQSDKLDLEPSPNLGPTGIDNTNVNLINAKGDVLLHIGIRRRENAFVFNSIPYGESRGPEERIPLEGTFGDRRDPSITVFDHPDRYQIMIDYKTVYYYKKRLEGRCEKVSYKINEGQTPPFSDVLGVTVLYFANVMPRAN.

One can recognise a Galectin domain in the interval 9–154 (STVDLSEPLK…FSDVLGVTVL (146 aa)). A carbohydrate-binding residues include H60, R64, N73, and E84.

Homotetramer. Oligomerization is required for carbohydrate binding.

The protein localises to the secreted. The protein resides in the extracellular space. It localises to the extracellular matrix. It is found in the cell wall. In terms of biological role, binds lactose. May play a role in fruiting body formation. In Coprinopsis cinerea (strain Okayama-7 / 130 / ATCC MYA-4618 / FGSC 9003) (Inky cap fungus), this protein is Galectin-3 (Cgl3).